Here is a 282-residue protein sequence, read N- to C-terminus: Phosphate import ATP-binding protein PstB (282 aa).

In terms of domain architecture, ABC transporter spans 36-277 (IEVKNLNFFY…PARKETEDYI (242 aa)). 68–75 (GPSGCGKS) serves as a coordination point for ATP.

The protein belongs to the ABC transporter superfamily. Phosphate importer (TC 3.A.1.7) family. The complex is composed of two ATP-binding proteins (PstB), two transmembrane proteins (PstC and PstA) and a solute-binding protein (PstS).

The protein localises to the cell inner membrane. The enzyme catalyses phosphate(out) + ATP + H2O = ADP + 2 phosphate(in) + H(+). Its function is as follows. Part of the ABC transporter complex PstSACB involved in phosphate import. Responsible for energy coupling to the transport system. This Burkholderia pseudomallei (strain 1710b) protein is Phosphate import ATP-binding protein PstB.